Reading from the N-terminus, the 243-residue chain is 23S rRNA (guanosine-2'-O-)-methyltransferase RlmB (243 aa).

S-adenosyl-L-methionine is bound by residues glycine 196, isoleucine 216, and leucine 225.

The protein belongs to the class IV-like SAM-binding methyltransferase superfamily. RNA methyltransferase TrmH family. RlmB subfamily. As to quaternary structure, homodimer.

The protein localises to the cytoplasm. The enzyme catalyses guanosine(2251) in 23S rRNA + S-adenosyl-L-methionine = 2'-O-methylguanosine(2251) in 23S rRNA + S-adenosyl-L-homocysteine + H(+). Specifically methylates the ribose of guanosine 2251 in 23S rRNA. In Salmonella typhi, this protein is 23S rRNA (guanosine-2'-O-)-methyltransferase RlmB.